Here is a 394-residue protein sequence, read N- to C-terminus: Mucosal addressin cell adhesion molecule 1 (394 aa).

A signal peptide spans Met1–Gly19. Ig-like domains lie at Gln20 to Tyr107, Ala108 to Glu225, and Pro256 to Gly345. At Gln20 to Ser353 the chain is on the extracellular side. The N-linked (GlcNAc...) asparagine glycan is linked to Asn42. Intrachain disulfides connect Cys43–Cys89, Cys47–Cys93, and Cys130–Cys198. Residues Gln219–Leu255 form a mucin-like region. A disulfide bridge links Cys282 with Cys330. A helical membrane pass occupies residues Met354–Tyr374. Residues Cys375–Leu394 are Cytoplasmic-facing.

Homodimer. As to expression, detected in Peyer patches and mesenteric lymph nodes but not in spleen.

The protein localises to the membrane. Its function is as follows. Cell adhesion leukocyte receptor expressed by mucosal venules, helps to direct lymphocyte traffic into mucosal tissues including the Peyer patches and the intestinal lamina propria. It can bind both the integrin alpha-4/beta-7 and L-selectin, regulating both the passage and retention of leukocytes. In Rattus norvegicus (Rat), this protein is Mucosal addressin cell adhesion molecule 1 (Madcam1).